A 210-amino-acid polypeptide reads, in one-letter code: RNA chaperone ProQ (210 aa).

A compositionally biased stretch (basic and acidic residues) spans 98–127; sequence HAKASLEESKAKVAARRKEQAKKAREEAKA. The segment at 98-155 is disordered; the sequence is HAKASLEESKAKVAARRKEQAKKAREEAKAKKPARATTPPKRRPQPAAVAKKQEKPVE.

It belongs to the ProQ family.

It localises to the cytoplasm. Functionally, RNA chaperone with significant RNA binding, RNA strand exchange and RNA duplexing activities. The chain is RNA chaperone ProQ from Aliivibrio salmonicida (strain LFI1238) (Vibrio salmonicida (strain LFI1238)).